The sequence spans 196 residues: DnaA initiator-associating protein DiaA (196 aa).

The region spanning Met-34–Asp-196 is the SIS domain.

This sequence belongs to the SIS family. DiaA subfamily. In terms of assembly, homotetramer; dimer of dimers.

Required for the timely initiation of chromosomal replication via direct interactions with the DnaA initiator protein. The chain is DnaA initiator-associating protein DiaA from Pectobacterium atrosepticum (strain SCRI 1043 / ATCC BAA-672) (Erwinia carotovora subsp. atroseptica).